We begin with the raw amino-acid sequence, 431 residues long: Magnetosome protein MamH (431 aa).

Transmembrane regions (helical) follow at residues 21-41 (LLSA…PLFL), 57-77 (ANVQ…LGYL), 86-106 (IIVA…LSPW), 107-127 (IGGA…IMSA), 156-176 (TAFM…QIPA), 178-198 (AGIA…AWLA), 243-263 (MVFV…LIKV), 274-294 (ILIG…RSFI), 302-321 (AVLL…GFII), 358-378 (LLGS…IFFV), and 380-400 (VGGF…TGVG).

The protein belongs to the major facilitator superfamily.

It localises to the magnetosome membrane. Functionally, required for correct biomineralization of the magnetosome; probably transports some form of iron. Partially functionally redundant with MamZ. The protein is Magnetosome protein MamH (mamH) of Paramagnetospirillum magneticum (strain ATCC 700264 / AMB-1) (Magnetospirillum magneticum).